A 396-amino-acid chain; its full sequence is Ribosomal RNA large subunit methyltransferase I (396 aa).

The PUA domain occupies 2–81; the sequence is SVRLVLTKGR…ETIDIAFFTR (80 aa).

This sequence belongs to the methyltransferase superfamily. RlmI family.

It localises to the cytoplasm. It carries out the reaction cytidine(1962) in 23S rRNA + S-adenosyl-L-methionine = 5-methylcytidine(1962) in 23S rRNA + S-adenosyl-L-homocysteine + H(+). In terms of biological role, specifically methylates the cytosine at position 1962 (m5C1962) of 23S rRNA. This is Ribosomal RNA large subunit methyltransferase I from Enterobacter sp. (strain 638).